The primary structure comprises 1223 residues: Kinesin-like protein costa (1223 aa).

One can recognise a Kinesin motor domain in the interval 4 to 394 (PIQVAVRICP…LQFAFKVQCV (391 aa)). Residues 13–90 (PYTEPSENRK…LPTDSNGNEN (78 aa)) are disordered. The span at 39 to 62 (AKAESFSDSEDNKNDASNRQRPEE) shows a compositional bias: basic and acidic residues. ATP is bound at residue 178–185 (GQRGQGKT). Disordered stretches follow at residues 494-528 (RSQK…ESQR), 560-604 (KHPK…SIQP), and 625-646 (TAQP…ESSA). Over residues 569–593 (QERDKESKLDAPPEKDKEKIEERKT) the composition is skewed to basic and acidic residues. Coiled coils occupy residues 658-743 (AAAN…QGRE), 773-825 (ESGQ…GASG), and 982-1015 (NKVI…ERVL). The disordered stretch occupies residues 774–799 (SGQKLKKLQQSMAESRKQQEELEKKI). Basic and acidic residues predominate over residues 787–799 (ESRKQQEELEKKI). Positions 1162-1178 (TTTATATTTTTTTTTTT) are enriched in low complexity. The segment at 1162-1188 (TTTATATTTTTTTTTTTGGKGKERGLP) is disordered.

This sequence belongs to the TRAFAC class myosin-kinesin ATPase superfamily. Kinesin family. KIF27 subfamily. In terms of assembly, homodimer (Potential). Binds microtubules. Interacts with ci, smo, sgg, CkIalpha and protein kinase A catalytic subunit.

It localises to the cytoplasm. Its subcellular location is the cytoskeleton. In terms of biological role, regulates cubitus interruptus (ci) processing by recruiting multiple kinases to promote its efficient phosphorylation. Scaffolds multiple kinases and ci into proximity to promote its hyperphosphorylation, which then targets it for SCFSlimb/proteasome-mediated processing to generate its repressor form. Hh signaling inhibits ci phosphorylation by interfering with the cos-ci-kinases complex formation. The chain is Kinesin-like protein costa (cos) from Drosophila pseudoobscura pseudoobscura (Fruit fly).